A 273-amino-acid polypeptide reads, in one-letter code: Formamidopyrimidine-DNA glycosylase (273 aa).

Residue proline 2 is the Schiff-base intermediate with DNA of the active site. The active-site Proton donor is glutamate 3. Lysine 58 functions as the Proton donor; for beta-elimination activity in the catalytic mechanism. Histidine 92, arginine 111, and lysine 153 together coordinate DNA. Residues 238 to 272 (MVYARDGQECLSCSSSIIKTKHSGRSTFYCKSCQK) form an FPG-type zinc finger. Arginine 262 functions as the Proton donor; for delta-elimination activity in the catalytic mechanism.

This sequence belongs to the FPG family. Monomer. Zn(2+) is required as a cofactor.

It catalyses the reaction Hydrolysis of DNA containing ring-opened 7-methylguanine residues, releasing 2,6-diamino-4-hydroxy-5-(N-methyl)formamidopyrimidine.. The enzyme catalyses 2'-deoxyribonucleotide-(2'-deoxyribose 5'-phosphate)-2'-deoxyribonucleotide-DNA = a 3'-end 2'-deoxyribonucleotide-(2,3-dehydro-2,3-deoxyribose 5'-phosphate)-DNA + a 5'-end 5'-phospho-2'-deoxyribonucleoside-DNA + H(+). Its function is as follows. Involved in base excision repair of DNA damaged by oxidation or by mutagenic agents. Acts as a DNA glycosylase that recognizes and removes damaged bases. Has a preference for oxidized purines, such as 7,8-dihydro-8-oxoguanine (8-oxoG). Has AP (apurinic/apyrimidinic) lyase activity and introduces nicks in the DNA strand. Cleaves the DNA backbone by beta-delta elimination to generate a single-strand break at the site of the removed base with both 3'- and 5'-phosphates. The sequence is that of Formamidopyrimidine-DNA glycosylase from Rickettsia bellii (strain OSU 85-389).